The sequence spans 721 residues: Protein mu-NS (721 aa).

Residues M1–P13 form an interaction with sigma-NS region. An RNA-binding region spans residues M1–S38. Residues V14–D40 are interaction with mu-2. Residues S471–L721 form an involved in the formation of factory-like inclusions region. 2 coiled-coil regions span residues L523 to A560 and Q628 to Q686.

Belongs to the orthoreovirus mu-NS protein family. In terms of assembly, interacts with mu-2. Interacts with sigma-NS; in viral factories. Interacts with the inner capsid proteins lambda-1 and sigma-2, and outer capsid protein lambda-2; in viral factories. The N-terminus is blocked.

It localises to the host cytoplasm. Functionally, non-structural protein implicated with protein sigma-NS in forming the matrix of viral factories, which are large inclusions in the host cytoplasm where replication intermediates are assembled and viral RNA replication takes place. Together with mu-2, recruits the other core proteins to these factories. The sequence is that of Protein mu-NS (M3) from Mammalia (T1L).